The sequence spans 259 residues: MIKQIGRFFRAFIFIMPLSLTSCESKIDRNRIWIVGTNATYPPFEYVDAQGEVVGFDIDLAKAISEKLGKQLEVREFAFDALILNLKKHRIDAILAGMSITPSRQKEIALLPYYGDEVQELMVVSKRSLETPVLPLTQYSSVAVQTGTFQEHYLLSQPGICVRSFDSTLEVIMEVRYGKSPVAVLEPSVGRVVLKDFPNLVATRLELPPECWVLGCGLGVAKDRPEEIQTIQQAITDLKSEGVIQSLTKKWQLSEVAYE.

Positions 1 to 25 are cleaved as a signal peptide; that stretch reads MIKQIGRFFRAFIFIMPLSLTSCES. Residues Asn38, Glu45, Ala96, Gly97, Ser99, Arg104, and Phe149 each coordinate L-arginine.

The protein belongs to the bacterial solute-binding protein 3 family.

It localises to the secreted. Its subcellular location is the cell surface. In terms of biological role, probably part of an ABC transporter complex involved in arginine transport. Binds arginine. Interacts with host epithelial cells, suggesting a role in host-cell adhesion during infection. In Chlamydia pneumoniae (Chlamydophila pneumoniae), this protein is Probable ABC transporter arginine-binding protein ArtJ.